A 441-amino-acid polypeptide reads, in one-letter code: Glutamate--tRNA ligase 1 (441 aa).

The short motif at 8–18 (PSPTGHIHVGN) is the 'HIGH' region element. The 'KMSKS' region signature appears at 239–243 (ELSKR). Residue lysine 242 participates in ATP binding.

The protein belongs to the class-I aminoacyl-tRNA synthetase family. Glutamate--tRNA ligase type 1 subfamily. In terms of assembly, monomer.

It is found in the cytoplasm. It catalyses the reaction tRNA(Glu) + L-glutamate + ATP = L-glutamyl-tRNA(Glu) + AMP + diphosphate. In terms of biological role, catalyzes the attachment of glutamate to tRNA(Glu) in a two-step reaction: glutamate is first activated by ATP to form Glu-AMP and then transferred to the acceptor end of tRNA(Glu). This chain is Glutamate--tRNA ligase 1, found in Paracoccus denitrificans (strain Pd 1222).